The sequence spans 365 residues: Ribosomal RNA large subunit methyltransferase F (365 aa).

The tract at residues 1-49 (MSKPAVKSVQSATAKTATRAVNIRQKVKAPKQAKPEAKGRVRPSKDKPR) is disordered. Basic and acidic residues predominate over residues 33-49 (AKPEAKGRVRPSKDKPR).

It belongs to the methyltransferase superfamily. METTL16/RlmF family.

It is found in the cytoplasm. The catalysed reaction is adenosine(1618) in 23S rRNA + S-adenosyl-L-methionine = N(6)-methyladenosine(1618) in 23S rRNA + S-adenosyl-L-homocysteine + H(+). Its function is as follows. Specifically methylates the adenine in position 1618 of 23S rRNA. This chain is Ribosomal RNA large subunit methyltransferase F, found in Shewanella baltica (strain OS185).